The primary structure comprises 306 residues: Curved DNA-binding protein (306 aa).

The J domain maps to 5 to 69; the sequence is DYYAIMGVKP…QRRAEYDQMW (65 aa).

The protein resides in the cytoplasm. The protein localises to the nucleoid. Its function is as follows. DNA-binding protein that preferentially recognizes a curved DNA sequence. It is probably a functional analog of DnaJ; displays overlapping activities with DnaJ, but functions under different conditions, probably acting as a molecular chaperone in an adaptive response to environmental stresses other than heat shock. Lacks autonomous chaperone activity; binds native substrates and targets them for recognition by DnaK. Its activity is inhibited by the binding of CbpM. This Escherichia coli (strain K12 / MC4100 / BW2952) protein is Curved DNA-binding protein.